The chain runs to 275 residues: 2,3,4,5-tetrahydropyridine-2,6-dicarboxylate N-succinyltransferase (275 aa).

Substrate is bound by residues arginine 107 and aspartate 144.

The protein belongs to the transferase hexapeptide repeat family. Homotrimer.

It localises to the cytoplasm. The catalysed reaction is (S)-2,3,4,5-tetrahydrodipicolinate + succinyl-CoA + H2O = (S)-2-succinylamino-6-oxoheptanedioate + CoA. It participates in amino-acid biosynthesis; L-lysine biosynthesis via DAP pathway; LL-2,6-diaminopimelate from (S)-tetrahydrodipicolinate (succinylase route): step 1/3. This Polynucleobacter asymbioticus (strain DSM 18221 / CIP 109841 / QLW-P1DMWA-1) (Polynucleobacter necessarius subsp. asymbioticus) protein is 2,3,4,5-tetrahydropyridine-2,6-dicarboxylate N-succinyltransferase.